Here is a 720-residue protein sequence, read N- to C-terminus: Photosystem I P700 chlorophyll a apoprotein A1 (720 aa).

Helical transmembrane passes span 61–84 (VFSA…FHGA), 147–170 (LYCT…FHYH), 186–210 (LNHH…HVSL), 282–300 (TAHH…GHMY), 337–360 (WHAQ…HHMY), 376–402 (LSLF…IFMV), 424–446 (AIVS…LYIH), and 522–540 (FLVH…LILL). 2 residues coordinate [4Fe-4S] cluster: Cys-564 and Cys-573. 2 helical membrane-spanning segments follow: residues 580-601 (HVFL…HFSW) and 655-677 (LSAY…MFLF). His-666 is a chlorophyll a' binding site. Residues Met-674 and Tyr-682 each coordinate chlorophyll a. A phylloquinone-binding site is contributed by Trp-683. The chain crosses the membrane as a helical span at residues 715-720 (AVGVAH).

The protein belongs to the PsaA/PsaB family. As to quaternary structure, the PsaA/B heterodimer binds the P700 chlorophyll special pair and subsequent electron acceptors. PSI consists of a core antenna complex that captures photons, and an electron transfer chain that converts photonic excitation into a charge separation. The eukaryotic PSI reaction center is composed of at least 11 subunits. P700 is a chlorophyll a/chlorophyll a' dimer, A0 is one or more chlorophyll a, A1 is one or both phylloquinones and FX is a shared 4Fe-4S iron-sulfur center. serves as cofactor.

It localises to the plastid. Its subcellular location is the chloroplast thylakoid membrane. It carries out the reaction reduced [plastocyanin] + hnu + oxidized [2Fe-2S]-[ferredoxin] = oxidized [plastocyanin] + reduced [2Fe-2S]-[ferredoxin]. PsaA and PsaB bind P700, the primary electron donor of photosystem I (PSI), as well as the electron acceptors A0, A1 and FX. PSI is a plastocyanin-ferredoxin oxidoreductase, converting photonic excitation into a charge separation, which transfers an electron from the donor P700 chlorophyll pair to the spectroscopically characterized acceptors A0, A1, FX, FA and FB in turn. Oxidized P700 is reduced on the lumenal side of the thylakoid membrane by plastocyanin. The chain is Photosystem I P700 chlorophyll a apoprotein A1 from Sequoia sempervirens (California redwood).